A 355-amino-acid polypeptide reads, in one-letter code: Ion-translocating oxidoreductase complex subunit D (355 aa).

The next 4 helical transmembrane spans lie at tryptophan 23–threonine 43, leucine 44–phenylalanine 64, alanine 78–alanine 109, and valine 129–isoleucine 149. Threonine 194 is subject to FMN phosphoryl threonine. The next 5 helical transmembrane spans lie at phenylalanine 221 to leucine 241, isoleucine 250 to proline 270, threonine 273 to alanine 293, isoleucine 307 to proline 327, and aspartate 328 to threonine 348.

It belongs to the NqrB/RnfD family. As to quaternary structure, the complex is composed of six subunits: RnfA, RnfB, RnfC, RnfD, RnfE and RnfG. The cofactor is FMN.

It is found in the cell inner membrane. Functionally, part of a membrane-bound complex that couples electron transfer with translocation of ions across the membrane. The protein is Ion-translocating oxidoreductase complex subunit D of Vibrio vulnificus (strain CMCP6).